The following is a 158-amino-acid chain: Large ribosomal subunit protein uL30 (158 aa).

Belongs to the universal ribosomal protein uL30 family. In terms of assembly, part of the 50S ribosomal subunit.

The chain is Large ribosomal subunit protein uL30 from Saccharolobus islandicus (strain Y.N.15.51 / Yellowstone #2) (Sulfolobus islandicus).